Here is a 416-residue protein sequence, read N- to C-terminus: Squamosa promoter-binding-like protein 8 (416 aa).

The segment at 11 to 53 is disordered; it reads SSCDDFGYNATPPPPPSLLPIMDQDGGGGSIQRDHHHHHNHQQ. The segment at 182–260 adopts an SBP-type zinc-finger fold; that stretch reads PPRCQAEGCK…ADHNRRRRKS (79 aa). Zn(2+) contacts are provided by C185, C190, C207, H210, C227, C230, H234, and C246. Positions 243 to 259 match the Bipartite nuclear localization signal motif; sequence KKSCRKRLADHNRRRRK. The segment at 250 to 299 is disordered; the sequence is LADHNRRRRKSKPSDGEHSGEKRRAQANKSAATKDKAGSSSKNAGIGDGF. Over residues 261–273 the composition is skewed to basic and acidic residues; it reads KPSDGEHSGEKRR.

Expressed in stems, leaf sheaths, and young panicles.

It localises to the nucleus. Probable transcription factor that plays an important role in building the laminar joint between leaf blade and leaf sheath boundary, thereby controlling ligule and auricle development. The sequence is that of Squamosa promoter-binding-like protein 8 (SPL8) from Oryza sativa subsp. indica (Rice).